A 348-amino-acid chain; its full sequence is Mitochondrial glycine transporter (348 aa).

Solcar repeat units lie at residues 10-94 (TKST…IREN), 130-214 (LSNT…SKQH), and 249-333 (RAAS…LIRR). 6 helical membrane-spanning segments follow: residues 16 to 41 (FVAG…TRVQ), 69 to 95 (GTLP…RENA), 136 to 161 (LLAG…VRYE), 189 to 212 (GFGA…EKSK), 253 to 279 (INFA…KTRI), and 308 to 326 (GLAL…AWTV).

It belongs to the mitochondrial carrier (TC 2.A.29) family. SLC25A38 subfamily.

The protein localises to the mitochondrion inner membrane. It carries out the reaction glycine(in) = glycine(out). Mitochondrial glycine transporter that imports glycine into the mitochondrial matrix. Plays an important role in providing glycine for the first enzymatic step in heme biosynthesis, the condensation of glycine with succinyl-CoA to produce 5-aminolevulinate (ALA) in the mitochondrial matrix. This chain is Mitochondrial glycine transporter (mic-13), found in Neurospora crassa (strain ATCC 24698 / 74-OR23-1A / CBS 708.71 / DSM 1257 / FGSC 987).